A 273-amino-acid chain; its full sequence is NADPH-dependent 7-cyano-7-deazaguanine reductase (273 aa).

80-82 provides a ligand contact to substrate; sequence VES. 82–83 contacts NADPH; it reads SK. Cys-180 functions as the Thioimide intermediate in the catalytic mechanism. Asp-187 functions as the Proton donor in the catalytic mechanism. 219-220 is a substrate binding site; that stretch reads HE. An NADPH-binding site is contributed by 248-249; the sequence is RG.

It belongs to the GTP cyclohydrolase I family. QueF type 2 subfamily. Homodimer.

The protein localises to the cytoplasm. The catalysed reaction is 7-aminomethyl-7-carbaguanine + 2 NADP(+) = 7-cyano-7-deazaguanine + 2 NADPH + 3 H(+). The protein operates within tRNA modification; tRNA-queuosine biosynthesis. In terms of biological role, catalyzes the NADPH-dependent reduction of 7-cyano-7-deazaguanine (preQ0) to 7-aminomethyl-7-deazaguanine (preQ1). The chain is NADPH-dependent 7-cyano-7-deazaguanine reductase from Bordetella pertussis (strain Tohama I / ATCC BAA-589 / NCTC 13251).